Here is a 398-residue protein sequence, read N- to C-terminus: RNA-binding protein rnc1 (398 aa).

A disordered region spans residues 40 to 78 (KVSIPTPKPSTPLSTLTNGSTIQQSMTNQPEPTSQVPPI). T50 is modified (phosphothreonine). A compositionally biased stretch (polar residues) spans 57–76 (NGSTIQQSMTNQPEPTSQVP). 2 consecutive KH domains span residues 93–157 (QLTL…YRFI) and 178–243 (PRKL…IWEI). Low complexity predominate over residues 274-290 (ASTASPQQVSPPAAPST). Positions 274–295 (ASTASPQQVSPPAAPSTTSGEA) are disordered. Positions 320 to 385 (KVTQNISIPA…EENEKALFLL (66 aa)) constitute a KH 3 domain.

Phosphorylated by pmk1. Phosphorylation causes enhancement of the RNA-binding activity.

The protein localises to the cytoplasm. Functionally, binds and stabilizes pmp1 mRNA and hence acts as a negative regulator of pmk1 signaling. Overexpression suppresses the Cl(-) sensitivity of calcineurin deletion. In Schizosaccharomyces pombe (strain 972 / ATCC 24843) (Fission yeast), this protein is RNA-binding protein rnc1.